The sequence spans 780 residues: Calpain clp-1 (780 aa).

Residues 269–282 show a composition bias toward basic and acidic residues; the sequence is DVDPFVRPGPDPDR. Residues 269-300 form a disordered region; it reads DVDPFVRPGPDPDRGGGGSGPSPISPRPTTEP. Residues 316–611 form the Calpain catalytic domain; sequence LFEDPQFLAN…FEKMEICNLG (296 aa). Active-site residues include C371, H527, and N551.

This sequence belongs to the peptidase C2 family. As to expression, expressed in muscle and neuronal tissues. Expressed in the ventral and dorsal nerve cord, intestinal and hypodermal tissues.

The protein localises to the cytoplasm. It localises to the myofibril. It is found in the sarcomere. The protein resides in the m line. In terms of biological role, calcium-regulated non-lysosomal thiol-protease which catalyzes limited proteolysis of substrates. Required for assembly and maintenance of integrin attachment complexes which are essential for maintenance of adult muscle. Proteolytic activity is activated in response to increased intracellular Ca(2+) levels during cell degeneration and promotes necrotic cell death. In Caenorhabditis elegans, this protein is Calpain clp-1.